Reading from the N-terminus, the 465-residue chain is FAD-dependent monooxygenase olcE (465 aa).

The chain crosses the membrane as a helical span at residues 9 to 29; the sequence is IIIGGSVAGLTLALSLNKIGI. FAD-binding residues include E35, G49, R108, D308, and A321.

Belongs to the paxM FAD-dependent monooxygenase family. FAD is required as a cofactor.

The protein localises to the membrane. Its pathway is secondary metabolite biosynthesis; terpenoid biosynthesis. In terms of biological role, FAD-dependent monooxygenase; part of the gene cluster that mediates the biosynthesis of 15-deoxyoxalicine B. The first step of the pathway is the synthesis of nicotinyl-CoA from nicotinic acid by the nicotinic acid-CoA ligase olcI. Nicotinyl-CoA is then a substrate of polyketide synthase olcA to produce 4-hydroxy-6-(3-pyridinyl)-2H-pyran-2-one (HPPO) which is further prenylated by the polyprenyl transferase olcH to yield geranylgeranyl-HPPO. Geranylgeranyl pyrophosphate is provided by the cluster-specific geranylgeranyl pyrophosphate synthase olcC. The FAD-dependent monooxygenase olcE catalyzes the epoxidation of geranylgeranyl-HPPO and the terpene cyclase olcD catalyzes the cyclization of the terpenoid component, resulting in the formation of the tricyclic terpene moiety seen in predecaturin E. The cytochrome P450 monooxygenase then catalyzes the allylic oxidation of predecaturin E, which is followed by spirocylization with concomitant loss of one molecule of water to form decaturin E. Decaturin E is the substrate of the cytochrome P450 monooxygenase olcJ which hydroxylates it at the C-29 position to form decaturin F. The short-chain dehydrogenase/reductase olcF may catalyze the oxidation of decaturin F to generate the 29-hydroxyl-27-one intermediate, and subsequent hemiacetal formation probably leads to the formation of decaturin C. The dioxygenase olcK may be a peroxisomal enzyme that catalyzes the hydroxylation of decaturin C into decaturin A once decaturin C is shuttled into the peroxisome by the MFS transporter olcL. Finally the cytochrome P450 monooxygenase olcB catalyzes the oxidative rearrangement to yield 15-deoxyoxalicine B. In the absence of olcJ, decaturin E may be shunted to a pathway in which it is oxidized to a ketone, possibly by olcF, to form decaturin D, which undergoes further allylic oxidation to yield decaturin G. Moreover, in the absence of oclK or oclL, oclB can convert decaturin C into 15-deoxyoxalicine A. This is FAD-dependent monooxygenase olcE from Penicillium canescens.